The primary structure comprises 333 residues: tRNA uridine(34) hydroxylase (333 aa).

The 95-residue stretch at 123-217 (SDPEVVLVDT…YLEEVNKAES (95 aa)) folds into the Rhodanese domain. Residue Cys-177 is the Cysteine persulfide intermediate of the active site. The segment covering 313-327 (QKKEALRKQSAEKNK) has biased composition (basic and acidic residues). A disordered region spans residues 313-333 (QKKEALRKQSAEKNKAKQANA).

It belongs to the TrhO family.

It carries out the reaction uridine(34) in tRNA + AH2 + O2 = 5-hydroxyuridine(34) in tRNA + A + H2O. Its function is as follows. Catalyzes oxygen-dependent 5-hydroxyuridine (ho5U) modification at position 34 in tRNAs. The sequence is that of tRNA uridine(34) hydroxylase from Shewanella oneidensis (strain ATCC 700550 / JCM 31522 / CIP 106686 / LMG 19005 / NCIMB 14063 / MR-1).